Reading from the N-terminus, the 371-residue chain is Opsin, ultraviolet-sensitive (371 aa).

Topologically, residues 1 to 52 (MSNDSIHWEARYLPAGPPRLLGWNVPAEELIHIPEHWLVYPEPNPSLHYLLA) are extracellular. The N-linked (GlcNAc...) asparagine glycan is linked to asparagine 3. Residues 53-73 (LLYILFTFLALLGNGLVIWIF) form a helical membrane-spanning segment. Residues 74 to 84 (CAAKSLRTPSN) lie on the Cytoplasmic side of the membrane. Residues 85–105 (MFVVNLAICDFFMMIKTPIFI) traverse the membrane as a helical segment. Residues 106 to 121 (YNSFNTGFALGNLGCQ) are Extracellular-facing. A disulfide bridge links cysteine 120 with cysteine 197. A helical transmembrane segment spans residues 122 to 142 (IFAVIGSLTGIGAAITNAAIA). The Cytoplasmic portion of the chain corresponds to 143 to 161 (YDRYSTIARPLDGKLSRGQ). The chain crosses the membrane as a helical span at residues 162-182 (VILFIVLIWTYTIPWALMPVM). Over 183–209 (GVWGRFVPEGFLTSCSFDYLTDTNEIR) the chain is Extracellular. A helical transmembrane segment spans residues 210–230 (IFVATIFTFSYCIPMILIIYY). The Cytoplasmic portion of the chain corresponds to 231–278 (YSQIVSHVVNHEKALREQAKKMNVDSLRSNANTSSQSAEIRIAKAAIT). Residues 279 to 299 (ICFLYVLSWTPYGVMSMIGAF) traverse the membrane as a helical segment. The Extracellular segment spans residues 300–302 (GNK). The chain crosses the membrane as a helical span at residues 303–323 (ALLTPGVTMIPACTCKAVACL). An N6-(retinylidene)lysine modification is found at lysine 318. Residues 324-371 (DPYVYAISHPKYRLELQKRLPWLELQEKPISDSTSTTTETVNTPPASS) are Cytoplasmic-facing.

Belongs to the G-protein coupled receptor 1 family. Opsin subfamily. Post-translationally, phosphorylated on some or all of the serine and threonine residues present in the C-terminal region. In terms of tissue distribution, expressed in the dorsal region of the retina.

It localises to the membrane. Functionally, visual pigments are the light-absorbing molecules that mediate vision. They consist of an apoprotein, opsin, covalently linked to 11-cis-retinal. The polypeptide is Opsin, ultraviolet-sensitive (UVOP) (Apis mellifera (Honeybee)).